Reading from the N-terminus, the 622-residue chain is Probable ATP-citrate synthase (622 aa).

ATP-binding positions include 228 to 248 (ALRYEKLPEVQMIVILGELGG) and 279 to 305 (FPTEVQFGHAGAKSGGETESADAKNKA). Glu245 provides a ligand contact to Mg(2+). The Tele-phosphohistidine intermediate role is filled by His287. 306–316 (LREAGAVVPTS) lines the CoA pocket.

This sequence in the N-terminal section; belongs to the succinate/malate CoA ligase beta subunit family. In the C-terminal section; belongs to the succinate/malate CoA ligase alpha subunit family. In terms of assembly, homotetramer.

The protein localises to the cytoplasm. The catalysed reaction is oxaloacetate + acetyl-CoA + ADP + phosphate = citrate + ATP + CoA. Catalyzes the cleavage of citrate into oxaloacetate and acetyl-CoA, the latter serving as common substrate in multiple biochemical reactions in protein, carbohydrate and lipid metabolism. The chain is Probable ATP-citrate synthase (acly) from Dictyostelium discoideum (Social amoeba).